We begin with the raw amino-acid sequence, 397 residues long: Succinate--CoA ligase [ADP-forming] subunit beta (397 aa).

In terms of domain architecture, ATP-grasp spans 9–254 (KALLAQYGAP…ETEEDPKELA (246 aa)). ATP-binding positions include Lys46, 53–55 (GRG), Glu109, Ser112, and Glu117. 2 residues coordinate Mg(2+): Asn209 and Asp223. Substrate contacts are provided by residues Asn274 and 331 to 333 (GIM).

This sequence belongs to the succinate/malate CoA ligase beta subunit family. In terms of assembly, heterotetramer of two alpha and two beta subunits. The cofactor is Mg(2+).

The enzyme catalyses succinate + ATP + CoA = succinyl-CoA + ADP + phosphate. The catalysed reaction is GTP + succinate + CoA = succinyl-CoA + GDP + phosphate. The protein operates within carbohydrate metabolism; tricarboxylic acid cycle; succinate from succinyl-CoA (ligase route): step 1/1. Its function is as follows. Succinyl-CoA synthetase functions in the citric acid cycle (TCA), coupling the hydrolysis of succinyl-CoA to the synthesis of either ATP or GTP and thus represents the only step of substrate-level phosphorylation in the TCA. The beta subunit provides nucleotide specificity of the enzyme and binds the substrate succinate, while the binding sites for coenzyme A and phosphate are found in the alpha subunit. This chain is Succinate--CoA ligase [ADP-forming] subunit beta, found in Jannaschia sp. (strain CCS1).